We begin with the raw amino-acid sequence, 310 residues long: Methionyl-tRNA formyltransferase (310 aa).

109-112 (SLLP) provides a ligand contact to (6S)-5,6,7,8-tetrahydrofolate.

This sequence belongs to the Fmt family.

It catalyses the reaction L-methionyl-tRNA(fMet) + (6R)-10-formyltetrahydrofolate = N-formyl-L-methionyl-tRNA(fMet) + (6S)-5,6,7,8-tetrahydrofolate + H(+). Its function is as follows. Attaches a formyl group to the free amino group of methionyl-tRNA(fMet). The formyl group appears to play a dual role in the initiator identity of N-formylmethionyl-tRNA by promoting its recognition by IF2 and preventing the misappropriation of this tRNA by the elongation apparatus. The protein is Methionyl-tRNA formyltransferase of Pseudomonas putida (strain W619).